Reading from the N-terminus, the 1026-residue chain is Beta-galactosidase (1026 aa).

The Proton donor role is filled by E458. E546 acts as the Nucleophile in catalysis.

It belongs to the glycosyl hydrolase 2 family.

The enzyme catalyses Hydrolysis of terminal non-reducing beta-D-galactose residues in beta-D-galactosides.. The polypeptide is Beta-galactosidase (lacZ) (Streptococcus thermophilus).